We begin with the raw amino-acid sequence, 104 residues long: Nucleoid-associated protein GAU_1113 (104 aa).

This sequence belongs to the YbaB/EbfC family. As to quaternary structure, homodimer.

The protein resides in the cytoplasm. Its subcellular location is the nucleoid. Binds to DNA and alters its conformation. May be involved in regulation of gene expression, nucleoid organization and DNA protection. The polypeptide is Nucleoid-associated protein GAU_1113 (Gemmatimonas aurantiaca (strain DSM 14586 / JCM 11422 / NBRC 100505 / T-27)).